We begin with the raw amino-acid sequence, 402 residues long: MADPKYADLPGIARNEPDVYETSDLPEDDQAEFEAELEELTSTSVEHLIINPNAAFEKFKDKRLGTDGVDFSDRISKSRTTGYESGEYEILGEGLGAKETPQQRYQRLQHEVQELIRDVEQIQSAVKESAAEEELTPMALARQLEGLKQQLVSCHLQKLLGPTAAIDFADPEGALAKRLQQQLEVPSVKKAAPAKSPPKAPGPTTDALTFELFWRRPEQDQFSQTAKIAELEKRLAQLEAMVRCEPDSQNPLLVGAEGTSLVETVQILQAKVNILDAAVLDQVEARLQRRPGSKVNEIAKHKAIVQDADTQSKIHQVVYEMMQRWDHMASSLPDVVQRLLTLRDLHEQASRFVQVLVHLDTTQQEVDVVQRLLAEVQKTMKENLAVVEDNFAEVEARIKRLQ.

Residues 1 to 26 are disordered; sequence MADPKYADLPGIARNEPDVYETSDLP. 2 coiled-coil regions span residues 101–132 and 357–402; these read PQQRYQRLQHEVQELIRDVEQIQSAVKESAAE and VHLD…KRLQ.

This sequence belongs to the dynactin subunit 2 family. In terms of assembly, subunit of dynactin, a multiprotein complex part of a tripartite complex with dynein and a adapter, such as BICDL1, BICD2 or HOOK3. The dynactin complex is built around ACTR1A/ACTB filament and consists of an actin-related filament composed of a shoulder domain, a pointed end and a barbed end. Its length is defined by its flexible shoulder domain. The soulder is composed of 2 DCTN1 subunits, 4 DCTN2 and 2 DCTN3.

It localises to the cytoplasm. The protein localises to the cytoskeleton. It is found in the microtubule organizing center. The protein resides in the centrosome. Its subcellular location is the membrane. Part of the dynactin complex that activates the molecular motor dynein for ultra-processive transport along microtubules. In the dynactin soulder domain, binds the ACTR1A filament and acts as a molecular ruler to determine the length. Modulates cytoplasmic dynein binding to an organelle, and plays a role in prometaphase chromosome alignment and spindle organization during mitosis. Involved in anchoring microtubules to centrosomes. This Gallus gallus (Chicken) protein is Dynactin subunit 2 (DCTN2).